The following is a 380-amino-acid chain: Kappa-type opioid receptor (380 aa).

Topologically, residues 1–57 are extracellular; the sequence is MESPIQIFRGDPGPTCSPSACLLPNSSSWFPNWAESDSNGSVGSEDQQLESAHISPA. Residues Asn25 and Asn39 are each glycosylated (N-linked (GlcNAc...) asparagine). Residues 58-85 form a helical membrane-spanning segment; the sequence is IPVIITAVYSVVFVVGLVGNSLVMFVII. The Cytoplasmic portion of the chain corresponds to 86 to 95; it reads RYTKMKTATN. The helical transmembrane segment at 96 to 119 threads the bilayer; the sequence is IYIFNLALADALVTTTMPFQSAVY. Over 120–132 the chain is Extracellular; sequence LMNSWPFGDVLCK. Cysteines 131 and 210 form a disulfide. The chain crosses the membrane as a helical span at residues 133-154; that stretch reads IVISIDYYNMFTSIFTLTMMSV. Residues 155–173 lie on the Cytoplasmic side of the membrane; sequence DRYIAVCHPVKALDFRTPL. Residues 174 to 196 form a helical membrane-spanning segment; sequence KAKIINICIWLLASSVGISAIVL. The Extracellular segment spans residues 197 to 222; it reads GGTKVREDVDVIECSLQFPDDEYSWW. A helical transmembrane segment spans residues 223–247; the sequence is DLFMKICVFVFAFVIPVLIIIVCYT. Topologically, residues 248–274 are cytoplasmic; sequence LMILRLKSVRLLSGSREKDRNLRRITK. Residues 275 to 296 form a helical membrane-spanning segment; that stretch reads LVLVVVAVFIICWTPIHIFILV. The Extracellular segment spans residues 297-311; that stretch reads EALGSTSHSTAALSS. The helical transmembrane segment at 312–333 threads the bilayer; sequence YYFCIALGYTNSSLNPVLYAFL. Over 334–380 the chain is Cytoplasmic; the sequence is DENFKRCFRDFCFPIKMRMERQSTNRVRNTVQDPASMRDVGGMNKPV. Cys345 carries S-palmitoyl cysteine lipidation.

It belongs to the G-protein coupled receptor 1 family. Interacts with NHERF1. Interacts with GABARAPL1. As to expression, detected in brain (at protein level). Brain (neocortex, hippocampus, amygdala, medial habenula, hypothalamus, locus ceruleus, and parabrachial nucleus).

The protein resides in the cell membrane. In terms of biological role, G-protein coupled opioid receptor that functions as a receptor for endogenous alpha-neoendorphins and dynorphins, but has low affinity for beta-endorphins. Also functions as a receptor for various synthetic opioids and for the psychoactive diterpene salvinorin A. Ligand binding causes a conformation change that triggers signaling via guanine nucleotide-binding proteins (G proteins) and modulates the activity of down-stream effectors, such as adenylate cyclase. Signaling leads to the inhibition of adenylate cyclase activity. Inhibits neurotransmitter release by reducing calcium ion currents and increasing potassium ion conductance. Plays a role in the perception of pain. Plays a role in mediating reduced physical activity upon treatment with synthetic opioids. Plays a role in the regulation of salivation in response to synthetic opioids. May play a role in arousal and regulation of autonomic and neuroendocrine functions. This Mus musculus (Mouse) protein is Kappa-type opioid receptor (Oprk1).